The following is a 283-amino-acid chain: Daunorubicin resistance ABC transporter permease protein DrrB1 (283 aa).

One can recognise an ABC transmembrane type-2 domain in the interval 53 to 280; sequence VQLIDIVLMP…PLTMRLYRNK (228 aa). 6 helical membrane-spanning segments follow: residues 58–78, 85–105, 150–170, 171–191, 198–218, and 252–272; these read IVLM…GAFA, LQFY…VYTG, VFLG…VVGA, MLVL…LGVV, VSGT…IFVM, and FWDV…FAPL.

This sequence belongs to the ABC-2 integral membrane protein family. As to quaternary structure, the complex is probably composed of two ATP-binding proteins (DrrA1) and two transmembrane proteins (DrrB1).

Its subcellular location is the cell membrane. Functionally, part of the ABC transporter complex DrrA1B1 involved in daunorubicin efflux. Responsible for the translocation of the substrate across the membrane. Confers self-resistance to daunorubicin, an antibiotic produced by S.coeruleorubidus. The chain is Daunorubicin resistance ABC transporter permease protein DrrB1 from Streptomyces coeruleorubidus.